Here is a 2472-residue protein sequence, read N- to C-terminus: MPPNIKWKELIKVDPDDLPRQEELADKLLISLSKVEVNELKNEDQENMIHLFRITQSLMKMKAQEVELALEEVEKAGEEQAKFENQLKTKVMKLENELEMAQQSAGGRDTRFLRDEIRQLEKQLEQKDRELEDMEKELDKEKKVNEQLALRNEEAENENSKLRRENEQLRQDIIDYQKQIDSQKESLLSRRGEDSDYRSQLSKKNYELVQYLDEIQTLTEANEKIEVQNQEMRKNLEESVQEMEKMTDEYNRMKALVHQSDAVMDQIKKENEHYRLQVRELTDLLKAKDEEDDPVMMAVNAKVEEWKLILSSKDDEIIEYQQMLQSLRGKLKNAQLDADKSNIMALKQGIQERDSQIKMLTEQVEQYTKEMEKNTFIIEDLKNELQKDKGTSNFYQQTHYMKIHSKVQILEEKTKEAERIAELAEADAREKDKELVEALKRLKDYESGVYGLEDAVIEIKNCKAQIKIRDGEMEVLTKEINKLEMKINDILDENEALRERAGLEPKTMIDLTEFRNSKRLKQQQYRAENQVLLKEIESLEEERLDLKRKIRQMAQERGKRNAASGLTIDDLNLSETFSHENKIEGRKLNFMSLNNMNETQSKNEFLSRELAEKEKDLERSRTVIAKFQSKLKELVEENKQLEEGMKEILQAIKDMPKDSDVKGGETSLIIPSLERLVNAMESKNAEGIFDASLHLKAQVDQLTGRNEELRQELRQSRKEAVNYSQQLVKANLKIDHLEKETDLLRQSAGSNVVYKGIDLPDGIAPSSAYIINSQNEYLIHLLQELDNKEKKLKHLEDSLEDYNRKFAVIRHQQSLLYKEYLSEKDIWKTDSEMIREEKRKLEDQAEQDAVKVKEYNNLLSALQMDSNEMKKMLSENSRKITVLQVNEKSLIRQYTTLVEMERHLRKENGKHRNDVIAMEAEVTEKLGSLQRFKEMAIFKIAALQKVIDNSVSLSELELANKQYNELTTKYRDILQKDNMLVQRTSNLEHLECENASLKEQMEAISKELEITKEKLHTIEQAWEQETKLGNDSNMDKAKKSMTNSDIVSISKKITVLEMKELNERQRAEHCQKMYEHLRTSLKQMEERNFELETKFTELTKINLDAQKVEQMLRDELADSVTKAVSDADRQRILELEKSEVELKVEVSKLREISDIAKRQVDFLNSQQQSREKEVESLRTQLLDFQAQSDEKALIAKLHQHVVSLQISEATALGKLESVTSKLQKMEAYNLRLEQKLDEKEQALYYARLEGRNRAKHLRQTIQSLRRQFSGALPLAQQEKFSKTMIQLQNDKLKIMQEMKNSQQEHRNMENKTLELELKLKGLEELISTLKDARGAQKVINWHVKIEELRLQELKLNRELVKGKEEIKYLNNIISEYEHTINSLEEEIVQQSKFHEERQMAWDQREVELERQLDIFDHQQNEILSAAQKFEDSTGSMPDPSLPLPNQLEIALRKIKENIQVILKTQATCKSLEEKLKEKESALRLAEQNILSRDKVINELRLRLPATADREKLIAELERKELEPKSHHTMKIAHQTIANMQARLNHKEEVLKKYQHLLEKAREEQREIVKKHEEDLHVLHHKLEQQADNSLNKFRQTAQDLLKQSPAPVPTNKHFIRLAEMEQTVAEQDDSLSSLLTKLKKVSKDLEKQKEITELKVREFENTKLRLQETHASEVKKVKAEVEDLRHALAQAHKDSQSLKSELQAQKEANSRAPTTTMRNLVDRLKSQLALKEKQQKALSRALLELRSEMTAAAEERIIAVTSQKEANLNVQQVVERHTRELKSQIEDLNENLLKLKEALKTSKNKENSLADDLNELNNELQKKQKAYNKILREKDGIDQENDELRRQIKRLSSGLQSKTLIDNKQSLIDELQKKVKKLESQLERKVDDVDIKPVKEKSSKEELIRWEEGKKWQTKVEGLRNRLKEKEGEAHGLAKQLNTLKELFAKADKEKLTLQKKLKTTGMTVDQVLGVRALESEKELEELKKKNLDLENDILYMRTQQALPRDSVVEDLHLQNKYLQEKLHTLEKKLSKEKYSQSLTSEIESDDHCQKEQELQKENLKLSSENIELKFQLEQANKDLPRLKNQVKDLKEMCEFLKKGKLELERKLGQVRGAGRSGKTIPELEKTIGLMKKVVEKVQRENEQLKKASGILTSEKMATIEEENRNLKAELEKLKAHFGRQLSMQFESKNKGTEKIVAENERLRKELKKEIEASEKLRIAKNNLELVNDKMAAQLEETGKRLQFAESRAPQLEGADSKSWKSIVVSRVYETKMKELESDIAKKNQSITDLKQLVREATEREQKAKKYTEDLEQQIEILKNVPEGAETEQELIRELQLLRLANNQMDKERAELIHQIEINKDQTRADSSIPDSDQLKEKINDLETQLRKLELEKQHSKEEVKKLKKELENFDPSFFEEIEDLKYNYKEEVKKNILLEEKLKKLSEQFGFELPSPLAASEHSEDGESPHSFPIY.

Residues 1 to 689 (MPPNIKWKEL…MESKNAEGIF (689 aa)) form a self-association (with itself or C-terminus) region. 3 coiled-coil regions span residues 59–747 (MKMK…LRQS), 1129–1392 (RQRI…QQSK), and 1459–1492 (QVILKTQATCKSLEEKLKEKESALRLAEQNILSR). The interval 128 to 164 (DRELEDMEKELDKEKKVNEQLALRNEEAENENSKLRR) is disordered. Residues 137–164 (ELDKEKKVNEQLALRNEEAENENSKLRR) are compositionally biased toward basic and acidic residues. The tract at residues 690–890 (DASLHLKAQV…TVLQVNEKSL (201 aa)) is interaction with IQCB1. Disordered stretches follow at residues 1691–1713 (AHKDSQSLKSELQAQKEANSRAP) and 2451–2472 (PSPLAASEHSEDGESPHSFPIY). Positions 1697-1713 (SLKSELQAQKEANSRAP) are enriched in polar residues. Residues 1960–2472 (TTGMTVDQVL…GESPHSFPIY (513 aa)) are self-association (with itself or N-terminus).

Part of the tectonic-like complex (also named B9 complex). Interacts with ATF4 via its N-terminal region. Associates with the BBSome complex, interacting (via N-terminus) with BBS4. Interacts with IQCB1/NPHP5; IQCB1 and CEP290/NPHP6 are proposed to form a functional NPHP5-6 module localized to the centrosome. Interacts with NPHP4; the interaction likely requires additional interactors. Interacts with ZNF423, FAM161A, CEP162, CEP162, CEP131, TALPID3, CCDC13, CC2D2A, RPGRIP1. Can self-associate (homo- or heteromeric). Interacts with CCP110; required for suppressing cilia formation. Interacts with RPGR. Associates (via C-terminus) with microtubules; association to microtubule is reduced in response to cellular stress, such as ultraviolet light (UV) radiation or heat shock, in a process that requires p38 MAP kinase signaling. Interacts with FAM161A. Interacts with PCM1. Interacts with CCDC66. Interacts with ARMC9 and CSPP1. In terms of processing, ubiquitinated. May undergo monoubiquitination; monoubiquitination is inhibited in response to cellular stress, such as ultraviolet light (UV) radiation or heat shock, but does not cause its displacement from centriolar satellites. In terms of tissue distribution, expressed in multiple organs during early postnatal development, with highest levels in hindbrain.

The protein localises to the cytoplasm. The protein resides in the cytoskeleton. It localises to the microtubule organizing center. It is found in the centrosome. Its subcellular location is the centriolar satellite. The protein localises to the nucleus. The protein resides in the centriole. It localises to the cell projection. It is found in the cilium. Its subcellular location is the cilium basal body. The protein localises to the cytoplasmic vesicle. Involved in early and late steps in cilia formation. Its association with CCP110 is required for inhibition of primary cilia formation by CCP110. May play a role in early ciliogenesis in the disappearance of centriolar satellites and in the transition of primary ciliar vesicles (PCVs) to capped ciliary vesicles (CCVs). Required for the centrosomal recruitment of RAB8A and for the targeting of centriole satellite proteins to centrosomes such as of PCM1. Required for the correct localization of ciliary and phototransduction proteins in retinal photoreceptor cells; may play a role in ciliary transport processes. Required for efficient recruitment of RAB8A to primary cilium. In the ciliary transition zone is part of the tectonic-like complex (also named B9 complex) which is required for tissue-specific ciliogenesis and may regulate ciliary membrane composition. Involved in regulation of the BBSome complex integrity, specifically for presence of BBS2, BBS5 and BBS8/TTC8 in the complex, and in ciliary targeting of selected BBSome cargos. May play a role in controlling entry of the BBSome complex to cilia possibly implicating IQCB1/NPHP5. Activates ATF4-mediated transcription. This Mus musculus (Mouse) protein is Centrosomal protein of 290 kDa.